The sequence spans 270 residues: Undecaprenyl-diphosphatase (270 aa).

8 consecutive transmembrane segments (helical) span residues 14-34, 40-60, 88-108, 117-137, 146-166, 189-209, 221-241, and 249-269; these read GLTE…PTFL, GITF…LYFW, FYII…ETTI, SLIA…DTSG, ITLK…IPGV, FSFL…LSGL, PLLI…AFLL, and LYPF…FINF.

It belongs to the UppP family.

It is found in the cell inner membrane. The catalysed reaction is di-trans,octa-cis-undecaprenyl diphosphate + H2O = di-trans,octa-cis-undecaprenyl phosphate + phosphate + H(+). In terms of biological role, catalyzes the dephosphorylation of undecaprenyl diphosphate (UPP). Confers resistance to bacitracin. The protein is Undecaprenyl-diphosphatase of Geotalea daltonii (strain DSM 22248 / JCM 15807 / FRC-32) (Geobacter daltonii).